The chain runs to 442 residues: MPGIKVFGGTVLQGSVRVSGAKNATTKLLVASLLSDKRTILKNVPNIEDVQQTVDLCRALGAIVDWDKQAQVIDIHTPRILLSKVPPQFSCVNRIPILLLGALLRRCPYGIFVPILGGDAIGPRTLHFHLEGLKKLGAEIIVSDEGYWAAAPDGLIGAHITLPYPSVGATENLILASVGAQGRTIIKNAALEVEIIDLIVFLQKAGVEITTDNDKTIEIFGCQDFYSVEHSIIPDKIEAASFGMAAVVSQGRVFVEHARHEHMIPFLKALRSIGGGFSVQENGIEFFYDKPLKGGVLLETDVHPGFITDWQQPFAVLLSQAEGCSVIHETVHENRLGYLSGLAKMGAHCDLFHECLSAKSCRYSTGNHPHSAVIHGPTPLQATHLVIPDLRAGFAYVMAALIAEGGVSKIENTKMLDRGYTDWLGNLERLGAKILTEKTRCV.

22–23 (KN) is a phosphoenolpyruvate binding site. Arg-94 contacts UDP-N-acetyl-alpha-D-glucosamine. The active-site Proton donor is Asp-119. UDP-N-acetyl-alpha-D-glucosamine is bound by residues Asp-309 and Val-331.

This sequence belongs to the EPSP synthase family. MurA subfamily.

It is found in the cytoplasm. The enzyme catalyses phosphoenolpyruvate + UDP-N-acetyl-alpha-D-glucosamine = UDP-N-acetyl-3-O-(1-carboxyvinyl)-alpha-D-glucosamine + phosphate. It participates in cell wall biogenesis; peptidoglycan biosynthesis. In terms of biological role, cell wall formation. Adds enolpyruvyl to UDP-N-acetylglucosamine. This chain is UDP-N-acetylglucosamine 1-carboxyvinyltransferase, found in Chlamydia muridarum (strain MoPn / Nigg).